We begin with the raw amino-acid sequence, 90 residues long: Large ribosomal subunit protein bL27 (90 aa).

Residues 1–22 form a disordered region; it reads MAHKKAGGSTRNGRDSNPKMLG.

It belongs to the bacterial ribosomal protein bL27 family.

The polypeptide is Large ribosomal subunit protein bL27 (Coxiella burnetii (strain CbuK_Q154) (Coxiella burnetii (strain Q154))).